The sequence spans 448 residues: Squalene synthase ERG9 (448 aa).

The helical transmembrane segment at 420–440 threads the bilayer; sequence RIEPGNFNCNVVLFGIGALIL.

This sequence belongs to the phytoene/squalene synthase family. Requires Mg(2+) as cofactor.

The protein localises to the endoplasmic reticulum membrane. It localises to the microsome. It carries out the reaction 2 (2E,6E)-farnesyl diphosphate + NADPH + H(+) = squalene + 2 diphosphate + NADP(+). It catalyses the reaction 2 (2E,6E)-farnesyl diphosphate + NADH + H(+) = squalene + 2 diphosphate + NAD(+). Its pathway is terpene metabolism; lanosterol biosynthesis; lanosterol from farnesyl diphosphate: step 1/3. Squalene synthase; part of the third module of ergosterol biosynthesis pathway that includes the late steps of the pathway. ERG9 produces squalene from 2 farnesyl pyrophosphate moieties. The third module or late pathway involves the ergosterol synthesis itself through consecutive reactions that mainly occur in the endoplasmic reticulum (ER) membrane. Firstly, the squalene synthase ERG9 catalyzes the condensation of 2 farnesyl pyrophosphate moieties to form squalene, which is the precursor of all steroids. Squalene synthase is crucial for balancing the incorporation of farnesyl diphosphate (FPP) into sterol and nonsterol isoprene synthesis. Secondly, the squalene epoxidase ERG1 catalyzes the stereospecific oxidation of squalene to (S)-2,3-epoxysqualene, which is considered to be a rate-limiting enzyme in steroid biosynthesis. Then, the lanosterol synthase ERG7 catalyzes the cyclization of (S)-2,3 oxidosqualene to lanosterol, a reaction that forms the sterol core. In the next steps, lanosterol is transformed to zymosterol through a complex process involving various demethylation, reduction and desaturation reactions. The lanosterol 14-alpha-demethylase ERG11 (also known as CYP51) catalyzes C14-demethylation of lanosterol to produce 4,4'-dimethyl cholesta-8,14,24-triene-3-beta-ol, which is critical for ergosterol biosynthesis. The C-14 reductase ERG24 reduces the C14=C15 double bond of 4,4-dimethyl-cholesta-8,14,24-trienol to produce 4,4-dimethyl-cholesta-8,24-dienol. 4,4-dimethyl-cholesta-8,24-dienol is substrate of the C-4 demethylation complex ERG25-ERG26-ERG27 in which ERG25 catalyzes the three-step monooxygenation required for the demethylation of 4,4-dimethyl and 4alpha-methylsterols, ERG26 catalyzes the oxidative decarboxylation that results in a reduction of the 3-beta-hydroxy group at the C-3 carbon to an oxo group, and ERG27 is responsible for the reduction of the keto group on the C-3. ERG28 has a role as a scaffold to help anchor ERG25, ERG26 and ERG27 to the endoplasmic reticulum and ERG29 regulates the activity of the iron-containing C4-methylsterol oxidase ERG25. Then, the sterol 24-C-methyltransferase ERG6 catalyzes the methyl transfer from S-adenosyl-methionine to the C-24 of zymosterol to form fecosterol. The C-8 sterol isomerase ERG2 catalyzes the reaction which results in unsaturation at C-7 in the B ring of sterols and thus converts fecosterol to episterol. The sterol-C5-desaturase ERG3 then catalyzes the introduction of a C-5 double bond in the B ring to produce 5-dehydroepisterol. The C-22 sterol desaturase ERG5 further converts 5-dehydroepisterol into ergosta-5,7,22,24(28)-tetraen-3beta-ol by forming the C-22(23) double bond in the sterol side chain. Finally, ergosta-5,7,22,24(28)-tetraen-3beta-ol is substrate of the C-24(28) sterol reductase ERG4 to produce ergosterol. The polypeptide is Squalene synthase ERG9 (Candida albicans (Yeast)).